The primary structure comprises 1205 residues: Nitric oxide synthase 3 (1205 aa).

The segment at 1–73 (MGNLKSVGQE…PPEGPKFPRV (73 aa)) is disordered. Residue Gly2 is the site of N-myristoyl glycine attachment. Residues Cys15 and Cys26 are each lipidated (S-palmitoyl cysteine). Residues 15-27 (CGLGLGLGLGLCG) show a composition bias toward gly residues. The segment covering 33-47 (TPAPEPSRAPAPATP) has biased composition (pro residues). Cys96 and Cys101 together coordinate Zn(2+). Residues 100 to 488 (RCLGSLVLPR…PDPWKGSAAK (389 aa)) form an interaction with NOSIP region. (6R)-L-erythro-5,6,7,8-tetrahydrobiopterin is bound at residue Ser104. At Ser116 the chain carries Phosphoserine; by CDK5. Heme b is bound at residue Cys186. Residues Gln249, Trp358, Tyr359, Glu363, and Asn368 each coordinate L-arginine. Positions 448, 449, and 462 each coordinate (6R)-L-erythro-5,6,7,8-tetrahydrobiopterin. A heme b-binding site is contributed by Tyr477. Residues 492-512 (IARKKTFKEVANAVKISASLM) form a calmodulin-binding region. A Phosphothreonine; by AMPK modification is found at Thr497. The Flavodoxin-like domain occupies 522-705 (ASILYASETV…AFRGWAQAAF (184 aa)). 6 residues coordinate FMN: Ser528, Glu529, Thr530, Arg532, Ser574, and Thr575. Ser617, Ser635, and Ser640 each carry phosphoserine. FMN contacts are provided by Ser656, Cys663, Glu689, and Gln693. The 247-residue stretch at 758-1004 (RKMFQATVLS…IRAAPSFRLP (247 aa)) folds into the FAD-binding FR-type domain. Arg778 serves as a coordination point for NADP(+). His800 provides a ligand contact to FAD. The tract at residues 820–848 (EDPTPPTESVGVEQLEKGSPGGPPPSWVR) is disordered. Position 838 is a phosphoserine (Ser838). FAD is bound by residues Arg940, Tyr942, Ser943, Thr958, Ala960, Tyr964, Val977, Cys978, and Ser979. Residues Thr1018, Arg1051, Ser1080, Arg1081, Lys1087, Tyr1089, and Gln1091 each contribute to the NADP(+) site. A Phosphothreonine modification is found at Thr1177. A Phosphoserine; by AMPK modification is found at Ser1179. Ser1181 carries the post-translational modification Phosphoserine.

Belongs to the NOS family. Homodimer. Interacts with NOSIP and NOSTRIN. Interacts with HSP90AB1. Forms a complex with ASL, ASS1 and SLC7A1; the complex regulates cell-autonomous L-arginine synthesis and citrulline recycling while channeling extracellular L-arginine to nitric oxide synthesis pathway. The cofactor is heme b. FAD is required as a cofactor. FMN serves as cofactor. Requires (6R)-L-erythro-5,6,7,8-tetrahydrobiopterin as cofactor. In terms of processing, phosphorylation by AMPK at Ser-1179 in the presence of Ca(2+)-calmodulin (CaM) activates activity. In absence of Ca(2+)-calmodulin, AMPK also phosphorylates Thr-497, resulting in inhibition of activity. Phosphorylation of Ser-116 by CDK5 reduces activity.

The protein localises to the membrane. It is found in the caveola. Its subcellular location is the cytoplasm. It localises to the cytoskeleton. The protein resides in the golgi apparatus. The protein localises to the cell membrane. The enzyme catalyses 2 L-arginine + 3 NADPH + 4 O2 + H(+) = 2 L-citrulline + 2 nitric oxide + 3 NADP(+) + 4 H2O. With respect to regulation, stimulated by calcium/calmodulin. Inhibited by NOSIP and NOSTRIN. In terms of biological role, produces nitric oxide (NO) which is implicated in vascular smooth muscle relaxation through a cGMP-mediated signal transduction pathway. NO mediates vascular endothelial growth factor (VEGF)-induced angiogenesis in coronary vessels and promotes blood clotting through the activation of platelets. This chain is Nitric oxide synthase 3 (NOS3), found in Sus scrofa (Pig).